We begin with the raw amino-acid sequence, 82 residues long: RNA-binding protein Hfq (82 aa).

Residues 9-68 (DPFLNTLRKEHVPVSIYLVNGIKLQGKVDSFDQYVIMLKNTVSQMVYKHAISTIVPGRPV) form the Sm domain.

The protein belongs to the Hfq family. Homohexamer.

Functionally, RNA chaperone that binds small regulatory RNA (sRNAs) and mRNAs to facilitate mRNA translational regulation in response to envelope stress, environmental stress and changes in metabolite concentrations. Also binds with high specificity to tRNAs. The protein is RNA-binding protein Hfq of Methylococcus capsulatus (strain ATCC 33009 / NCIMB 11132 / Bath).